The chain runs to 740 residues: ATP-dependent RNA helicase DDX1 (740 aa).

The necessary for interaction with HNRNPK stretch occupies residues 1-295 (MAAFSEMGVM…APKALIVEPS (295 aa)). The interaction with dsRNA stretch occupies residues 1 to 448 (MAAFSEMGVM…DTVHHVVVPV (448 aa)). Residues 1–525 (MAAFSEMGVM…KIDCDNLEQY (525 aa)) form a necessary for interaction with RELA region. The region spanning 2 to 428 (AAFSEMGVMP…SEKIMHFPTW (427 aa)) is the Helicase ATP-binding domain. ATP is bound at residue 46–53 (AETGSGKT). Residues 70 to 247 (DQQEGKKGKT…LKFNFGEEEF (178 aa)) form the B30.2/SPRY domain. N6-acetyllysine occurs at positions 239 and 268. An N6-acetyllysine; alternate modification is found at Lys-281. Lys-281 is covalently cross-linked (Glycyl lysine isopeptide (Lys-Gly) (interchain with G-Cter in SUMO2); alternate). The DEAD box signature appears at 370-373 (DEAD). A Phosphoserine modification is found at Ser-481. Residues 493-681 (KGEYAVRAIK…QVEPDIKVPV (189 aa)) form the Helicase C-terminal domain. The tract at residues 525 to 740 (YFMQQGGGPD…YLPNQLFRTF (216 aa)) is necessary for interaction with HNRNPK.

The protein belongs to the DEAD box helicase family. DDX1 subfamily. As to quaternary structure, found in a multi-helicase-TICAM1 complex at least composed of DHX36, DDX1, DDX21 and TICAM1; this complex exists in resting cells with or without poly(I:C) RNA ligand stimulation. Interacts with DHX36. Interacts (via B30.2/SPRY domain) with DDX21 (via N-terminus); this interaction serves as bridges to TICAM1. Interacts with FAM98A (via N- and C-terminus). Interacts with PHF5A (via C-terminus). Interacts with MBNL1. Interacts with CSTF2. Interacts with HNRNPK. Interacts with ATM. Interacts with RELA (via C-terminus). Component of the tRNA-splicing ligase complex. Interacts with PQBP1. Interacts with ERCC6. Phosphorylated by ATM kinase; phosphorylation is increased in response to ionizing radiation (IR).

It is found in the nucleus. It localises to the cytoplasm. The protein localises to the cytoplasmic granule. The protein resides in the cytosol. Its subcellular location is the mitochondrion. It carries out the reaction ATP + H2O = ADP + phosphate + H(+). In terms of biological role, acts as an ATP-dependent RNA helicase, able to unwind both RNA-RNA and RNA-DNA duplexes. Possesses 5' single-stranded RNA overhang nuclease activity. Possesses ATPase activity on various RNA, but not DNA polynucleotides. May play a role in RNA clearance at DNA double-strand breaks (DSBs), thereby facilitating the template-guided repair of transcriptionally active regions of the genome. Together with RELA, acts as a coactivator to enhance NF-kappa-B-mediated transcriptional activation. Acts as a positive transcriptional regulator of cyclin CCND2 expression. Binds to the cyclin CCND2 promoter region. Associates with chromatin at the NF-kappa-B promoter region via association with RELA. Binds to poly(A) RNA. May be involved in 3'-end cleavage and polyadenylation of pre-mRNAs. Component of the tRNA-splicing ligase complex required to facilitate the enzymatic turnover of catalytic subunit RTCB: together with archease (ZBTB8OS), acts by facilitating the guanylylation of RTCB, a key intermediate step in tRNA ligation. Component of a multi-helicase-TICAM1 complex that acts as a cytoplasmic sensor of viral double-stranded RNA (dsRNA) and plays a role in the activation of a cascade of antiviral responses including the induction of pro-inflammatory cytokines via the adapter molecule TICAM1. Specifically binds (via helicase ATP-binding domain) on both short and long poly(I:C) dsRNA. This chain is ATP-dependent RNA helicase DDX1 (DDX1), found in Macaca fascicularis (Crab-eating macaque).